Reading from the N-terminus, the 573-residue chain is Arylsulfatase I (573 aa).

Positions 1–23 are cleaved as a signal peptide; that stretch reads MHALTGLSLVSLLSFGYLSWDWA. D56, D57, and C94 together coordinate Ca(2+). C94 functions as the Nucleophile in the catalytic mechanism. C94 is modified (3-oxoalanine (Cys)). A substrate-binding site is contributed by K148. H150 is an active-site residue. H240 serves as a coordination point for substrate. N-linked (GlcNAc...) asparagine glycosylation is found at N277 and N289. 2 residues coordinate Ca(2+): D298 and N299. Residue K316 coordinates substrate. Residues N467 and N497 are each glycosylated (N-linked (GlcNAc...) asparagine). Residues 516-550 form a disordered region; sequence FNGGAWGPWASDEEEEEEEEEAGRARSFSRGRRKK. The span at 526–536 shows a compositional bias: acidic residues; it reads SDEEEEEEEEE.

It belongs to the sulfatase family. The cofactor is Ca(2+). Post-translationally, the oxidation of Cys-94 residue to 3-oxoalanine (also known as C(alpha)-formylglycine) by SUMF1/Sulfatase-modifying factor 1, seems critical for catalytic activity.

It is found in the secreted. The protein resides in the endoplasmic reticulum. In terms of biological role, displays arylsulfatase activity at neutral pH, when co-expressed with SUMF1; arylsulfatase activity is measured in the secretion medium of retinal cell line, but no activity is recorded when measured in cell extracts. This Canis lupus familiaris (Dog) protein is Arylsulfatase I (ARSI).